A 300-amino-acid chain; its full sequence is Polyamine aminopropyltransferase (300 aa).

The PABS domain occupies 4–237 (WHWHIEWQTP…GLWGFVYASD (234 aa)). An S-methyl-5'-thioadenosine-binding site is contributed by Gln-33. 2 residues coordinate spermidine: His-64 and Glu-88. S-methyl-5'-thioadenosine contacts are provided by residues Asp-108 and 140–141 (DG). The Proton acceptor role is filled by Asp-158. Residue Pro-167 coordinates S-methyl-5'-thioadenosine.

Belongs to the spermidine/spermine synthase family. Homodimer or homotetramer.

It is found in the cytoplasm. The catalysed reaction is S-adenosyl 3-(methylsulfanyl)propylamine + putrescine = S-methyl-5'-thioadenosine + spermidine + H(+). It participates in amine and polyamine biosynthesis; spermidine biosynthesis; spermidine from putrescine: step 1/1. Its function is as follows. Catalyzes the irreversible transfer of a propylamine group from the amino donor S-adenosylmethioninamine (decarboxy-AdoMet) to putrescine (1,4-diaminobutane) to yield spermidine. The chain is Polyamine aminopropyltransferase from Sulfurisphaera tokodaii (strain DSM 16993 / JCM 10545 / NBRC 100140 / 7) (Sulfolobus tokodaii).